The following is an 83-amino-acid chain: Putative snRNP Sm-like protein (83 aa).

The Sm domain maps to 9-81 (KPMDVLKNAL…VIFVSPSKGD (73 aa)).

This sequence belongs to the snRNP Sm proteins family.

This is Putative snRNP Sm-like protein from Thermoplasma volcanium (strain ATCC 51530 / DSM 4299 / JCM 9571 / NBRC 15438 / GSS1).